The sequence spans 663 residues: Beta-galactosidase BgaH (663 aa).

R103 provides a ligand contact to substrate. C107 serves as a coordination point for Zn(2+). N141 is a substrate binding site. E142 acts as the Proton donor in catalysis. C151, C153, and C156 together coordinate Zn(2+). E311 functions as the Nucleophile in the catalytic mechanism. Residues W319 and E359–H362 each bind substrate.

It belongs to the glycosyl hydrolase 42 family. Homodimer.

It catalyses the reaction Hydrolysis of terminal non-reducing beta-D-galactose residues in beta-D-galactosides.. With respect to regulation, requires 4 M NaCl for maximal activity. Loss of activity if DTT or beta-mercaptoethanol is omitted from buffers. Addition of 5-20 mM EDTA, 1 mM Cu(2+) or 1 mM Zn(2+) results in loss of activity. Functionally, when overexpressed, cleaves several different substrates including o-nitrophenyl-beta-D-galactopyranoside (ONPG), chromogen 5-bromo-4-chloro-3-indolyl-beta-D-galactopyranoside (X-Gal) and lactulose, but not lactose. Also has beta-D-fucosidase activity. No beta-L-fucosidase, beta-glucosidase, beta-arabinosidase or beta-xylosidase activity. The chain is Beta-galactosidase BgaH from Haloferax lucentense (strain DSM 14919 / JCM 9276 / NCIMB 13854 / Aa 2.2) (Haloferax alicantei).